The chain runs to 233 residues: Uridylate kinase (233 aa).

9-10 (GS) contributes to the ATP binding site. G43 contributes to the UMP binding site. Positions 44 and 48 each coordinate ATP. UMP is bound by residues D65 and 113 to 119 (VTPGQTT). The ATP site is built by T139, Y145, and D148.

Belongs to the UMP kinase family. Homohexamer.

It localises to the cytoplasm. The enzyme catalyses UMP + ATP = UDP + ADP. The protein operates within pyrimidine metabolism; CTP biosynthesis via de novo pathway; UDP from UMP (UMPK route): step 1/1. Inhibited by UTP. Catalyzes the reversible phosphorylation of UMP to UDP. The sequence is that of Uridylate kinase from Methanosarcina acetivorans (strain ATCC 35395 / DSM 2834 / JCM 12185 / C2A).